A 456-amino-acid polypeptide reads, in one-letter code: Serine--tRNA ligase (456 aa).

252 to 254 (TSE) contacts L-serine. ATP-binding positions include 283–285 (RKE) and Val299. Glu306 lines the L-serine pocket. Residue 370 to 373 (ELVS) coordinates ATP. Thr404 contacts L-serine.

This sequence belongs to the class-II aminoacyl-tRNA synthetase family. Type-1 seryl-tRNA synthetase subfamily. In terms of assembly, homodimer. The tRNA molecule binds across the dimer.

It localises to the cytoplasm. It carries out the reaction tRNA(Ser) + L-serine + ATP = L-seryl-tRNA(Ser) + AMP + diphosphate + H(+). The enzyme catalyses tRNA(Sec) + L-serine + ATP = L-seryl-tRNA(Sec) + AMP + diphosphate + H(+). Its pathway is aminoacyl-tRNA biosynthesis; selenocysteinyl-tRNA(Sec) biosynthesis; L-seryl-tRNA(Sec) from L-serine and tRNA(Sec): step 1/1. Its function is as follows. Catalyzes the attachment of serine to tRNA(Ser). Is also able to aminoacylate tRNA(Sec) with serine, to form the misacylated tRNA L-seryl-tRNA(Sec), which will be further converted into selenocysteinyl-tRNA(Sec). This Korarchaeum cryptofilum (strain OPF8) protein is Serine--tRNA ligase.